Consider the following 121-residue polypeptide: Group 1 truncated hemoglobin (121 aa).

Met-1 is subject to N-acetylmethionine. Residue His-73 participates in heme binding.

It belongs to the truncated hemoglobin family. Group I subfamily. In terms of assembly, monomer. It depends on heme as a cofactor.

This chain is Group 1 truncated hemoglobin, found in Tetrahymena thermophila.